A 391-amino-acid polypeptide reads, in one-letter code: Phosphoglycerate kinase (391 aa).

Residues 21–23 (DLN), arginine 36, 59–62 (HLGR), arginine 113, and arginine 146 each bind substrate. ATP-binding positions include lysine 197, glutamate 319, and 345–348 (GGDT).

The protein belongs to the phosphoglycerate kinase family. In terms of assembly, monomer.

Its subcellular location is the cytoplasm. The enzyme catalyses (2R)-3-phosphoglycerate + ATP = (2R)-3-phospho-glyceroyl phosphate + ADP. It participates in carbohydrate degradation; glycolysis; pyruvate from D-glyceraldehyde 3-phosphate: step 2/5. This Xanthomonas euvesicatoria pv. vesicatoria (strain 85-10) (Xanthomonas campestris pv. vesicatoria) protein is Phosphoglycerate kinase.